A 156-amino-acid polypeptide reads, in one-letter code: Small ribosomal subunit protein uS7 (156 aa).

Belongs to the universal ribosomal protein uS7 family. Part of the 30S ribosomal subunit. Contacts proteins S9 and S11.

One of the primary rRNA binding proteins, it binds directly to 16S rRNA where it nucleates assembly of the head domain of the 30S subunit. Is located at the subunit interface close to the decoding center, probably blocks exit of the E-site tRNA. In Geobacillus kaustophilus (strain HTA426), this protein is Small ribosomal subunit protein uS7.